A 592-amino-acid polypeptide reads, in one-letter code: Calnexin (592 aa).

An N-terminal signal peptide occupies residues 1 to 20 (MEGKWLLCMLLVLGTAIVEA). Over 21–481 (HDGHDDDVID…QMIEAAEERP (461 aa)) the chain is Lumenal. Ca(2+) contacts are provided by serine 74 and aspartate 117. Lysine 137 is modified (N6-acetyllysine). An intrachain disulfide couples cysteine 160 to cysteine 194. An alpha-D-glucoside-binding residues include tyrosine 164, lysine 166, tyrosine 185, and aspartate 192. The segment at 260-345 (GNLLNDMTPP…AEKPEDWDED (86 aa)) is disordered. Over residues 274–319 (REIEDPEDRKPEDWDERPKIPDPEAVKPDDWDEDAPAKIPDEEATK) the composition is skewed to basic and acidic residues. Positions 276–409 (IEDPEDRKPE…RKIPNPDFFE (134 aa)) are p domain (Extended arm). 5 consecutive repeat copies span residues 278–290 (DPEDRKPEDWDER), 295–307 (DPEAVKPDDWDED), 314–326 (DEEATKPEGWLDD), 333–345 (DPDAEKPEDWDED), and 348–358 (GEWEAPQIANP). 4 X approximate repeats regions lie at residues 278-345 (DPED…WDED) and 348-405 (GEWE…IPNP). Over residues 323-345 (WLDDEPEYVPDPDAEKPEDWDED) the composition is skewed to acidic residues. The interval 326–359 (DEPEYVPDPDAEKPEDWDEDMDGEWEAPQIANPR) is interaction with PPIB. Cysteine 360 and cysteine 366 are joined by a disulfide. A run of 3 repeats spans residues 367–377 (GVWQRPVIDNP), 381–391 (GKWKPPMIDNP), and 395–405 (GIWKPRKIPNP). Glutamate 425 is a binding site for an alpha-D-glucoside. Position 436 (aspartate 436) interacts with Ca(2+). A helical transmembrane segment spans residues 482–502 (WLWVVYILTVALPVFLVILFC). Residues cysteine 502 and cysteine 503 are each lipidated (S-palmitoyl cysteine). The Cytoplasmic portion of the chain corresponds to 503-592 (CSGKKQTSGM…SPRNRKPRRE (90 aa)). The segment at 503–592 (CSGKKQTSGM…SPRNRKPRRE (90 aa)) is sufficient to mediate interaction with SGIP1. The disordered stretch occupies residues 511–592 (GMEYKKTDAP…SPRNRKPRRE (82 aa)). A compositionally biased stretch (acidic residues) spans 525–547 (KEEEEEKEEEKDKGDEEEEGEEK). Serine 554 bears the Phosphoserine mark. Residue threonine 562 is modified to Phosphothreonine. A Phosphoserine; by MAPK3 modification is found at serine 564. Serine 583 bears the Phosphoserine mark.

Belongs to the calreticulin family. In terms of assembly, interacts with MAPK3/ERK1. Interacts with KCNH2. Associates with ribosomes. Interacts with SGIP1; involved in negative regulation of endocytosis. The palmitoylated form interacts with the ribosome-translocon complex component SSR1, promoting efficient folding of glycoproteins. Interacts with SERPINA2P/SERPINA2 and with the S and Z variants of SERPINA1. Interacts with PPIB. Interacts with ZNRF4. Interacts with SMIM22. Interacts with TMX2. Interacts with TMEM35A/NACHO. Interacts with CHRNA7. Interacts with reticulophagy regulators RETREG2 and RETREG3. Interacts with DNM1L; may form part of a larger protein complex at the ER-mitochondrial interface during mitochondrial fission. Interacts with ADAM7. As to quaternary structure, (Microbial infection) Interacts with HBV large envelope protein, isoform L. (Microbial infection) Interacts with HBV large envelope protein, isoform M; this association may be essential for isoform M proper secretion. Post-translationally, phosphorylated at Ser-564 by MAPK3/ERK1. Phosphorylation by MAPK3/ERK1 increases its association with ribosomes. In terms of processing, palmitoylation by DHHC6 leads to the preferential localization to the perinuclear rough ER. It mediates the association of calnexin with the ribosome-translocon complex (RTC) which is required for efficient folding of glycosylated proteins. Ubiquitinated, leading to proteasomal degradation. Probably ubiquitinated by ZNRF4.

The protein localises to the endoplasmic reticulum membrane. It localises to the mitochondrion membrane. It is found in the melanosome membrane. In terms of biological role, calcium-binding protein that interacts with newly synthesized monoglucosylated glycoproteins in the endoplasmic reticulum. It may act in assisting protein assembly and/or in the retention within the ER of unassembled protein subunits. It seems to play a major role in the quality control apparatus of the ER by the retention of incorrectly folded proteins. Associated with partial T-cell antigen receptor complexes that escape the ER of immature thymocytes, it may function as a signaling complex regulating thymocyte maturation. Additionally it may play a role in receptor-mediated endocytosis at the synapse. The chain is Calnexin (CANX) from Homo sapiens (Human).